The primary structure comprises 530 residues: GMP synthase [glutamine-hydrolyzing] (530 aa).

The Glutamine amidotransferase type-1 domain occupies 4–205 (RILILDYGSQ…VKDICGCEGD (202 aa)). The active-site Nucleophile is C84. Residues H179 and E181 contribute to the active site. The region spanning 206–398 (WNMPDYISEA…LGLPPQMVYR (193 aa)) is the GMPS ATP-PPase domain. 233–239 (SGGVDSL) is a binding site for ATP.

In terms of assembly, homodimer.

The catalysed reaction is XMP + L-glutamine + ATP + H2O = GMP + L-glutamate + AMP + diphosphate + 2 H(+). It participates in purine metabolism; GMP biosynthesis; GMP from XMP (L-Gln route): step 1/1. Catalyzes the synthesis of GMP from XMP. This is GMP synthase [glutamine-hydrolyzing] from Bordetella parapertussis (strain 12822 / ATCC BAA-587 / NCTC 13253).